The sequence spans 1411 residues: Protein ECM5 (1411 aa).

Positions 118–159 (IPTFILAKKELPDPIKFYELVEDLGSVYGCVKLKIIPDADKF) constitute a JmjN domain. Residues 185–279 (RTKIVDFYAK…ILLDFDIYEE (95 aa)) form the ARID domain. The segment at 285–312 (RNNEKNEDMVESEIFRHSNSRSRDEEEP) is disordered. One can recognise a JmjC domain in the interval 476-695 (KNILDQWNLD…FSSEAAKWTS (220 aa)). The segment at 1238–1290 (TKYCFCRRVEEGTAMVECEICKEWYHVDCISNGELVPPDDPNVLFVCSICTPP) adopts a PHD-type zinc-finger fold.

It is found in the nucleus. Its function is as follows. May be involved in cell wall organization and biogenesis. The polypeptide is Protein ECM5 (ECM5) (Saccharomyces cerevisiae (strain ATCC 204508 / S288c) (Baker's yeast)).